Reading from the N-terminus, the 235-residue chain is Aspartate/glutamate leucyltransferase (235 aa).

Belongs to the R-transferase family. Bpt subfamily.

It localises to the cytoplasm. It catalyses the reaction N-terminal L-glutamyl-[protein] + L-leucyl-tRNA(Leu) = N-terminal L-leucyl-L-glutamyl-[protein] + tRNA(Leu) + H(+). The catalysed reaction is N-terminal L-aspartyl-[protein] + L-leucyl-tRNA(Leu) = N-terminal L-leucyl-L-aspartyl-[protein] + tRNA(Leu) + H(+). In terms of biological role, functions in the N-end rule pathway of protein degradation where it conjugates Leu from its aminoacyl-tRNA to the N-termini of proteins containing an N-terminal aspartate or glutamate. This Pseudomonas fluorescens (strain Pf0-1) protein is Aspartate/glutamate leucyltransferase.